The chain runs to 152 residues: Ribosomal RNA large subunit methyltransferase H (152 aa).

S-adenosyl-L-methionine is bound by residues L69, G96, and 118–123 (FGKLTF).

This sequence belongs to the RNA methyltransferase RlmH family. In terms of assembly, homodimer.

It localises to the cytoplasm. The enzyme catalyses pseudouridine(1915) in 23S rRNA + S-adenosyl-L-methionine = N(3)-methylpseudouridine(1915) in 23S rRNA + S-adenosyl-L-homocysteine + H(+). Its function is as follows. Specifically methylates the pseudouridine at position 1915 (m3Psi1915) in 23S rRNA. The chain is Ribosomal RNA large subunit methyltransferase H from Mesomycoplasma hyopneumoniae (strain 7448) (Mycoplasma hyopneumoniae).